A 403-amino-acid polypeptide reads, in one-letter code: Soluble calcium-activated nucleotidase 1 (403 aa).

Over 1-44 (MPIQPFDQREWNEPMHSLRISVGGLPVLASMTKATDPRFRPRWR) the chain is Cytoplasmic. The helical; Signal-anchor for type II membrane protein transmembrane segment at 45 to 61 (VILTSFVGAALLWLLYS) threads the bilayer. At 62 to 403 (HHQGPVPGRP…TVKYEGIEFI (342 aa)) the chain is on the lumenal side. N90 carries an N-linked (GlcNAc...) asparagine glycan. S170, D171, E217, E286, S347, and E398 together coordinate Ca(2+).

Belongs to the apyrase family. Monomer. Homodimer; dimerization is Ca(2+)-dependent. The cofactor is Ca(2+).

The protein localises to the endoplasmic reticulum membrane. It is found in the golgi apparatus. It localises to the golgi stack membrane. The enzyme catalyses a ribonucleoside 5'-diphosphate + H2O = a ribonucleoside 5'-phosphate + phosphate + H(+). Functionally, calcium-dependent nucleotidase with a preference for UDP. The order of activity with different substrates is UDP &gt; GDP &gt; IDP &gt;&gt; UTP &gt; CDP = GTP = ITP. Has very low activity towards ADP and even lower activity towards ATP. Does not hydrolyze AMP and GMP. Involved in proteoglycan synthesis. This chain is Soluble calcium-activated nucleotidase 1 (Cant1), found in Mus musculus (Mouse).